Here is a 202-residue protein sequence, read N- to C-terminus: Acireductone dioxygenase (202 aa).

Fe(2+) contacts are provided by histidine 110, histidine 112, glutamate 116, and histidine 154. The Ni(2+) site is built by histidine 110, histidine 112, glutamate 116, and histidine 154.

This sequence belongs to the acireductone dioxygenase (ARD) family. As to quaternary structure, monomer. The cofactor is Fe(2+). Requires Ni(2+) as cofactor.

The enzyme catalyses 1,2-dihydroxy-5-(methylsulfanyl)pent-1-en-3-one + O2 = 3-(methylsulfanyl)propanoate + CO + formate + 2 H(+). It catalyses the reaction 1,2-dihydroxy-5-(methylsulfanyl)pent-1-en-3-one + O2 = 4-methylsulfanyl-2-oxobutanoate + formate + 2 H(+). It participates in amino-acid biosynthesis; L-methionine biosynthesis via salvage pathway; L-methionine from S-methyl-5-thio-alpha-D-ribose 1-phosphate: step 5/6. Its function is as follows. Catalyzes 2 different reactions between oxygen and the acireductone 1,2-dihydroxy-3-keto-5-methylthiopentene (DHK-MTPene) depending upon the metal bound in the active site. Fe-containing acireductone dioxygenase (Fe-ARD) produces formate and 2-keto-4-methylthiobutyrate (KMTB), the alpha-ketoacid precursor of methionine in the methionine recycle pathway. Ni-containing acireductone dioxygenase (Ni-ARD) produces methylthiopropionate, carbon monoxide and formate, and does not lie on the methionine recycle pathway. The chain is Acireductone dioxygenase from Synechococcus sp. (strain CC9311).